The following is a 242-amino-acid chain: Probable transcriptional regulatory protein HEAR0561 (242 aa).

It belongs to the TACO1 family.

The protein localises to the cytoplasm. This Herminiimonas arsenicoxydans protein is Probable transcriptional regulatory protein HEAR0561.